A 157-amino-acid chain; its full sequence is Phosphopantetheine adenylyltransferase (157 aa).

Threonine 8 provides a ligand contact to substrate. ATP contacts are provided by residues 8–9 (TF) and histidine 16. 3 residues coordinate substrate: lysine 40, threonine 72, and arginine 86. ATP-binding positions include 87–89 (GLR), glutamate 97, and 122–128 (YSFLSSS).

It belongs to the bacterial CoaD family. In terms of assembly, homohexamer. Mg(2+) is required as a cofactor.

Its subcellular location is the cytoplasm. The catalysed reaction is (R)-4'-phosphopantetheine + ATP + H(+) = 3'-dephospho-CoA + diphosphate. It functions in the pathway cofactor biosynthesis; coenzyme A biosynthesis; CoA from (R)-pantothenate: step 4/5. Reversibly transfers an adenylyl group from ATP to 4'-phosphopantetheine, yielding dephospho-CoA (dPCoA) and pyrophosphate. This is Phosphopantetheine adenylyltransferase from Prochlorococcus marinus (strain AS9601).